Here is a 35-residue protein sequence, read N- to C-terminus: Cupiennin-2d (35 aa).

A Glutamine amide modification is found at Q35.

As to expression, expressed by the venom gland.

It localises to the secreted. The chain is Cupiennin-2d from Cupiennius salei (American wandering spider).